The chain runs to 80 residues: Acyl carrier protein (80 aa).

Residues 2-77 (SDIEQRVKKI…QAIDYAKAHV (76 aa)) enclose the Carrier domain. Ser37 is modified (O-(pantetheine 4'-phosphoryl)serine).

It belongs to the acyl carrier protein (ACP) family. 4'-phosphopantetheine is transferred from CoA to a specific serine of apo-ACP by AcpS. This modification is essential for activity because fatty acids are bound in thioester linkage to the sulfhydryl of the prosthetic group.

It is found in the cytoplasm. It participates in lipid metabolism; fatty acid biosynthesis. In terms of biological role, carrier of the growing fatty acid chain in fatty acid biosynthesis. The polypeptide is Acyl carrier protein (Herminiimonas arsenicoxydans).